Consider the following 466-residue polypeptide: Soluble pyridine nucleotide transhydrogenase (466 aa).

Residue 36 to 45 (ERYQNVGGGC) participates in FAD binding.

This sequence belongs to the class-I pyridine nucleotide-disulfide oxidoreductase family. The cofactor is FAD.

Its subcellular location is the cytoplasm. It catalyses the reaction NAD(+) + NADPH = NADH + NADP(+). In terms of biological role, conversion of NADPH, generated by peripheral catabolic pathways, to NADH, which can enter the respiratory chain for energy generation. The sequence is that of Soluble pyridine nucleotide transhydrogenase from Escherichia fergusonii (strain ATCC 35469 / DSM 13698 / CCUG 18766 / IAM 14443 / JCM 21226 / LMG 7866 / NBRC 102419 / NCTC 12128 / CDC 0568-73).